The sequence spans 238 residues: Ribonuclease PH (238 aa).

Phosphate is bound by residues Arg86 and 124-126 (GTR).

It belongs to the RNase PH family. As to quaternary structure, homohexameric ring arranged as a trimer of dimers.

The catalysed reaction is tRNA(n+1) + phosphate = tRNA(n) + a ribonucleoside 5'-diphosphate. Functionally, phosphorolytic 3'-5' exoribonuclease that plays an important role in tRNA 3'-end maturation. Removes nucleotide residues following the 3'-CCA terminus of tRNAs; can also add nucleotides to the ends of RNA molecules by using nucleoside diphosphates as substrates, but this may not be physiologically important. Probably plays a role in initiation of 16S rRNA degradation (leading to ribosome degradation) during starvation. In Photobacterium profundum (strain SS9), this protein is Ribonuclease PH.